Reading from the N-terminus, the 381-residue chain is GDP-mannose-dependent monoacylated alpha-(1-6)-phosphatidylinositol monomannoside mannosyltransferase (381 aa).

GDP-alpha-D-mannose-binding residues include Arg206, Lys211, Leu261, and Glu298.

It belongs to the glycosyltransferase group 1 family. Glycosyltransferase 4 subfamily.

The enzyme catalyses a 1,2-diacyl-sn-glycero-3-phospho-[alpha-D-mannopyranosyl-(1&lt;-&gt;6)-D-myo-inositol] + GDP-alpha-D-mannose = a 2,6-O-bis(alpha-D-mannopyranosyl)-1-phosphatidyl-1D-myo-inositol + GDP + H(+). It carries out the reaction a 1,2-diacyl-sn-glycero-3-phospho-[alpha-D-6-acyl-mannopyranosyl-(1&lt;-&gt;6)-D-myo-inositol] + GDP-alpha-D-mannose = a 2-O-(alpha-D-mannosyl)-6-O-(6-O-acyl-alpha-D-mannosyl)-1-phosphatidyl-1D-myo-inositol + GDP + H(+). Its pathway is phospholipid metabolism; phosphatidylinositol metabolism. Its function is as follows. Involved in the biosynthesis of phosphatidyl-myo-inositol mannosides (PIM) which are early precursors in the biosynthesis of lipomannans (LM) and lipoarabinomannans (LAM). Catalyzes the addition of a mannosyl residue from GDP-D-mannose (GDP-Man) to the position 6 of a phosphatidyl-myo-inositol bearing an alpha-1,2-linked mannose residue (PIM1) to generate phosphatidyl-myo-inositol bearing alpha-1,2- and alpha-1,6-linked mannose residues (Ac1PIM2). PimB also catalyzes the addition of a mannosyl residue from GDP-Man to the position 6 of phosphatidyl-myo-inositol bearing an acylated alpha-1,2-linked mannose residue (Ac1PIM1) to generate monoacylated phosphatidyl-myo-inositol bearing alpha-1,2- and alpha-1,6-linked mannose residues (Ac1PIM2). The addition of the second mannosyl residue by PimB preferentially occurs before the acylation of the mannosyl residue transferred by PimA. Also able to transfer a mannosyl residue from GDP-Man to the position 6 of a phosphatidyl-myo-inositol (PI), but this reaction is very slow. The chain is GDP-mannose-dependent monoacylated alpha-(1-6)-phosphatidylinositol monomannoside mannosyltransferase from Corynebacterium glutamicum (strain ATCC 13032 / DSM 20300 / JCM 1318 / BCRC 11384 / CCUG 27702 / LMG 3730 / NBRC 12168 / NCIMB 10025 / NRRL B-2784 / 534).